Reading from the N-terminus, the 569-residue chain is Urease subunit beta (569 aa).

The 439-residue stretch at Gly-131–Phe-569 folds into the Urease domain. Ni(2+) contacts are provided by His-136, His-138, and Lys-219. Position 219 is an N6-carboxylysine (Lys-219). Residue His-221 participates in substrate binding. Positions 248 and 274 each coordinate Ni(2+). The Proton donor role is filled by His-322. Asp-362 is a binding site for Ni(2+).

Belongs to the metallo-dependent hydrolases superfamily. Urease alpha subunit family. Heterohexamer of 3 UreA (alpha) and 3 UreB (beta) subunits. It depends on Ni cation as a cofactor. Post-translationally, carboxylation allows a single lysine to coordinate two nickel ions.

It is found in the cytoplasm. The enzyme catalyses urea + 2 H2O + H(+) = hydrogencarbonate + 2 NH4(+). It participates in nitrogen metabolism; urea degradation; CO(2) and NH(3) from urea (urease route): step 1/1. This Helicobacter pylori (strain HPAG1) protein is Urease subunit beta.